The following is a 321-amino-acid chain: uncharacterized protein (321 aa).

The next 9 membrane-spanning stretches (helical) occupy residues 10–28, 41–63, 94–111, 116–138, 143–165, 200–222, 237–259, 266–283, and 293–315; these read LWCS…EMSI, IALY…IWIY, NVAM…SMVH, LFYG…VWLL, FLFY…SNGV, NGVI…DIIF, PFII…VILA, YIIK…SIKI, and IMLS…KFFF.

It belongs to the TerC family.

It is found in the cell membrane. This is an uncharacterized protein from Buchnera aphidicola subsp. Baizongia pistaciae (strain Bp).